Consider the following 127-residue polypeptide: DNA-directed RNA polymerases I, II, and III subunit RPABC2 (127 aa).

Over residues M1 to E34 the composition is skewed to acidic residues. Positions M1–T53 are disordered. At S2 the chain carries N-acetylserine. S2 is subject to Phosphoserine; by CK2.

The protein belongs to the archaeal Rpo6/eukaryotic RPB6 RNA polymerase subunit family. In terms of assembly, component of the RNA polymerase I (Pol I), RNA polymerase II (Pol II) and RNA polymerase III (Pol III) complexes consisting of at least 13, 12 and 17 subunits, respectively. Pol I complex consists of a ten-subunit catalytic core composed of POLR1A/RPA1, POLR1B/RPA2, POLR1C/RPAC1, POLR1D/RPAC2, POLR1H/RPA12, POLR2E/RPABC1, POLR2F/RPABC2, POLR2H/RPABC3, POLR2K/RPABC4 and POLR2L/RPABC5; a mobile stalk subunit POLR1F/RPA43 protruding from the core and additional subunits homologous to general transcription factors POLR1E/RPA49 and POLR1G/RPA34. Part of Pol I pre-initiation complex (PIC), in which Pol I core assembles with RRN3 and promoter-bound UTBF and SL1/TIF-IB complex. Pol II complex contains a ten-subunit catalytic core composed of POLR2A/RPB1, POLR2B/RPB2, POLR2C/RPB3, POLR2I/RPB9, POLR2J/RPB11, POLR2E/RPABC1, POLR2F/RPABC2, POLR2H/RPABC3, POLR2K/RPABC4 and POLR2L/RPABC5 and a mobile stalk composed of two subunits POLR2D/RPB4 and POLR2G/RPB7. Part of Pol II(G) complex, in which Pol II core associates with an additional subunit POLR2M; unlike conventional Pol II, Pol II(G) functions as a transcriptional repressor. Part of TBP-based Pol II pre-initiation complex (PIC), in which Pol II core assembles with general transcription factors and other specific initiation factors including GTF2E1, GTF2E2, GTF2F1, GTF2F2, TCEA1, ERCC2, ERCC3, GTF2H2, GTF2H3, GTF2H4, GTF2H5, GTF2A1, GTF2A2, GTF2B and TBP; this large multi-subunit PIC complex mediates DNA unwinding and targets Pol II core to the transcription start site where the first phosphodiester bond forms. Pol III complex consists of a ten-subunit catalytic core composed of POLR3A/RPC1, POLR3B/RPC2, POLR1C/RPAC1, POLR1D/RPAC2, POLR3K/RPC10, POLR2E/RPABC1, POLR2F/RPABC2, POLR2H/RPABC3, POLR2K/RPABC4 and POLR2L/RPABC5; a mobile stalk composed of two subunits POLR3H/RPC8 and CRCP/RPC9, protruding from the core and functioning primarily in transcription initiation; and additional subunits homologous to general transcription factors of the RNA polymerase II machinery, POLR3C/RPC3-POLR3F/RPC6-POLR3G/RPC7 heterotrimer required for transcription initiation and POLR3D/RPC4-POLR3E/RPC5 heterodimer involved in both transcription initiation and termination.

It localises to the nucleus. The protein resides in the nucleolus. DNA-dependent RNA polymerase catalyzes the transcription of DNA into RNA using the four ribonucleoside triphosphates as substrates. Common component of RNA polymerases I, II, and III which synthesize ribosomal RNA precursors, mRNA precursors and many functional non-coding RNAs, and small RNAs, such as 5S rRNA and tRNAs, respectively. Pol II is the central component of the basal RNA polymerase II transcription machinery. Pols are composed of mobile elements that move relative to each other. In Pol II, POLR2F/RPABC2 is part of the clamp element and together with parts of POLR2A/RPB1 and POLR2B/RPB2 forms a pocket to which the POLR2D/RPB4-POLR2G/RPB7 subcomplex binds. This Homo sapiens (Human) protein is DNA-directed RNA polymerases I, II, and III subunit RPABC2.